Reading from the N-terminus, the 141-residue chain is 3-hydroxyacyl-[acyl-carrier-protein] dehydratase FabZ (141 aa).

The active site involves His-49.

This sequence belongs to the thioester dehydratase family. FabZ subfamily.

The protein resides in the cytoplasm. It carries out the reaction a (3R)-hydroxyacyl-[ACP] = a (2E)-enoyl-[ACP] + H2O. In terms of biological role, involved in unsaturated fatty acids biosynthesis. Catalyzes the dehydration of short chain beta-hydroxyacyl-ACPs and long chain saturated and unsaturated beta-hydroxyacyl-ACPs. This Fusobacterium nucleatum subsp. nucleatum (strain ATCC 25586 / DSM 15643 / BCRC 10681 / CIP 101130 / JCM 8532 / KCTC 2640 / LMG 13131 / VPI 4355) protein is 3-hydroxyacyl-[acyl-carrier-protein] dehydratase FabZ.